Consider the following 950-residue polypeptide: A disintegrin and metalloproteinase with thrombospondin motifs 15 (950 aa).

The N-terminal stretch at 1–18 (MLLLGISILALAWRPAGS) is a signal peptide. Positions 19–212 (SEPEWEVVVP…NRRRSGRAKR (194 aa)) are excised as a propeptide. Asparagine 141 is a glycosylation site (N-linked (GlcNAc...) asparagine). Residues 144-172 (APEAQRHSQGAHLLQRRGAPVGPSGDPTS) are disordered. A Cysteine switch motif is present at residues 172–179 (SRCGVASG). Zn(2+) is bound at residue cysteine 174. The region spanning 218-427 (RYVETLVVAD…GHGDCLLDQP (210 aa)) is the Peptidase M12B domain. Disulfide bonds link cysteine 293–cysteine 345, cysteine 322–cysteine 327, cysteine 339–cysteine 422, cysteine 377–cysteine 406, cysteine 448–cysteine 470, cysteine 459–cysteine 480, cysteine 465–cysteine 499, cysteine 493–cysteine 504, cysteine 528–cysteine 565, cysteine 532–cysteine 570, and cysteine 543–cysteine 555. Residue histidine 361 participates in Zn(2+) binding. Glutamate 362 is a catalytic residue. Zn(2+) contacts are provided by histidine 365 and histidine 371. Residues 428–515 (SKPITLPEDL…ERHNPNKYRV (88 aa)) enclose the Disintegrin domain. The TSP type-1 1 domain occupies 516 to 571 (DGSWAKWEPYGSCSRTCGGGVQLARRQCSNPTPANGGKYCEGVRVKYRSCNLEPCP). Asparagine 591, asparagine 623, and asparagine 679 each carry an N-linked (GlcNAc...) asparagine glycan. The segment at 701 to 838 (AIPAGASSID…SNQVEQPDNR (138 aa)) is spacer. The disordered stretch occupies residues 798-822 (FYLPKEPREDKSTRPKDPRGSPVLR). The segment covering 802 to 816 (KEPREDKSTRPKDPR) has biased composition (basic and acidic residues). 2 consecutive TSP type-1 domains span residues 839–895 (PPAR…EPCP) and 896–949 (TWEL…VLRP).

Zn(2+) is required as a cofactor. In terms of processing, the precursor is cleaved by a furin endopeptidase. Post-translationally, glycosylated. Can be O-fucosylated by POFUT2 on a serine or a threonine residue found within the consensus sequence C1-X(2)-(S/T)-C2-G of the TSP type-1 repeat domains where C1 and C2 are the first and second cysteine residue of the repeat, respectively. Fucosylated repeats can then be further glycosylated by the addition of a beta-1,3-glucose residue by the glucosyltransferase, B3GALTL. Fucosylation mediates the efficient secretion of ADAMTS family members. Can be C-glycosylated with one or two mannose molecules on tryptophan residues within the consensus sequence W-X-X-W of the TPRs. Also N-glycosylated. These other glycosylations can also facilitate secretion. In the adult colon, highly expressed in the muscularis externa (inner circular smooth muscle and outer longitudinal smooth muscle), muscularis mucosa, submucosal glands, crypt, villi epithelial cells, goblet cells and lamina propria. Expressed at perimuscular and peritendious areas in the developing limbs.

It localises to the secreted. The protein localises to the extracellular space. It is found in the extracellular matrix. Its subcellular location is the cell surface. In terms of biological role, metalloprotease which has proteolytic activity against the proteoglycan VCAN, cleaving it at the 'Glu-1401-|-1402-Ala' site. Cleaves VCAN in the pericellular matrix surrounding myoblasts, facilitating myoblast contact and fusion which is required for skeletal muscle development and regeneration. The polypeptide is A disintegrin and metalloproteinase with thrombospondin motifs 15 (Adamts15) (Mus musculus (Mouse)).